Reading from the N-terminus, the 255-residue chain is 5'-nucleotidase SurE (255 aa).

Positions 8, 9, 40, and 93 each coordinate a divalent metal cation.

Belongs to the SurE nucleotidase family. It depends on a divalent metal cation as a cofactor.

The protein resides in the cytoplasm. The enzyme catalyses a ribonucleoside 5'-phosphate + H2O = a ribonucleoside + phosphate. Its function is as follows. Nucleotidase that shows phosphatase activity on nucleoside 5'-monophosphates. This is 5'-nucleotidase SurE from Rhodopseudomonas palustris (strain ATCC BAA-98 / CGA009).